Reading from the N-terminus, the 154-residue chain is Mitochondrial fission 1 protein (154 aa).

Residues 1–124 (MEDLLNEVVP…KEIDKEVAKG (124 aa)) lie on the Cytoplasmic side of the membrane. The helical transmembrane segment at 125-145 (MVVAGGAALVLGGILGLGIAM) threads the bilayer. Over 146–154 (ARNKQKREK) the chain is Mitochondrial intermembrane.

This sequence belongs to the FIS1 family.

It is found in the mitochondrion outer membrane. Involved in the fragmentation of the mitochondrial network and its perinuclear clustering. Functions downstream of Pink1 and upstream of Drp1 to regulate mitochondrial fission. In Drosophila melanogaster (Fruit fly), this protein is Mitochondrial fission 1 protein.